A 518-amino-acid chain; its full sequence is uncharacterized protein (518 aa).

Positions 1–21 (MWKWKVILLFLAEMFVSGVNG) are cleaved as a signal peptide. Asn-30, Asn-142, Asn-295, Asn-342, Asn-362, Asn-410, and Asn-503 each carry an N-linked (GlcNAc...) asparagine glycan. Residues 389–517 (CPPFGITNSV…RGFWVSITPQ (129 aa)) form the CUB domain.

The protein resides in the secreted. This is an uncharacterized protein from Caenorhabditis elegans.